Reading from the N-terminus, the 561-residue chain is DNA ligase (561 aa).

An ATP-binding site is contributed by Glu-247. Residue Lys-249 is the N6-AMP-lysine intermediate of the active site. Residues Arg-254, Arg-269, Glu-299, Phe-339, Arg-414, and Lys-420 each coordinate ATP.

The protein belongs to the ATP-dependent DNA ligase family. In terms of assembly, monomer. It depends on Mg(2+) as a cofactor.

The enzyme catalyses ATP + (deoxyribonucleotide)n-3'-hydroxyl + 5'-phospho-(deoxyribonucleotide)m = (deoxyribonucleotide)n+m + AMP + diphosphate.. Its function is as follows. DNA ligase that seals nicks in double-stranded DNA during DNA replication, DNA recombination and DNA repair. This chain is DNA ligase, found in Pyrococcus furiosus (strain ATCC 43587 / DSM 3638 / JCM 8422 / Vc1).